Reading from the N-terminus, the 320-residue chain is Nucleotide-binding protein Acid_7395 (320 aa).

A disordered region spans residues Met1–Gln34. Position 44-51 (Gly44–Gly51) interacts with ATP. Asp94–Glu97 lines the GTP pocket.

This sequence belongs to the RapZ-like family.

Displays ATPase and GTPase activities. The sequence is that of Nucleotide-binding protein Acid_7395 from Solibacter usitatus (strain Ellin6076).